The chain runs to 688 residues: Complement C1s subcomponent (688 aa).

The first 15 residues, Met-1–Ala-15, serve as a signal peptide directing secretion. Residues Glu-16–Thr-130 enclose the CUB 1 domain. Residues Glu-60, Asp-68, Asp-113, Asp-131, Ile-132, and Glu-134 each contribute to the Ca(2+) site. A disulfide bond links Cys-65 and Cys-83. The EGF-like; calcium-binding domain maps to Asp-131–Gly-172. 3 disulfides stabilise this stretch: Cys-135–Cys-147, Cys-143–Cys-156, and Cys-158–Cys-171. Positions 149, 150, and 153 each coordinate Ca(2+). At Asn-149 the chain carries (3R)-3-hydroxyasparagine. N-linked (GlcNAc...) asparagine glycosylation occurs at Asn-174. Cysteines 175 and 202 form a disulfide. The region spanning Cys-175–Asp-290 is the CUB 2 domain. Ca(2+) is bound by residues Glu-226, Asp-236, Asp-275, Gly-278, and Gln-279. A disulfide bridge connects residues Cys-234 and Cys-251. Sushi domains lie at Met-292–Pro-356 and Val-357–Pro-423. Intrachain disulfides connect Cys-294–Cys-341, Cys-321–Cys-354, Cys-359–Cys-403, Cys-386–Cys-421, Cys-425–Cys-549, Cys-595–Cys-618, and Cys-628–Cys-659. N-linked (GlcNAc...) asparagine glycosylation occurs at Asn-406. The 243-residue stretch at Ile-438 to Gln-680 folds into the Peptidase S1 domain. Catalysis depends on charge relay system residues His-475 and Asp-529. Ser-632 serves as the catalytic Charge relay system.

It belongs to the peptidase S1 family. In terms of assembly, core component of the complement C1 complex, a calcium-dependent complex composed of 1 molecule of the C1Q subcomplex, 2 molecules of C1R and 2 molecules of C1S. The C1Q subcomplex is composed 18 subunits: 3 chains of C1QA, C1QB, and C1QC trimerize to form 6 collagen-like triple helices connected to six globular ligand-recognition modules. Post-translationally, cleaved and activated by C1R to generate Complement C1s subcomponent heavy and light chains. The iron and 2-oxoglutarate dependent 3-hydroxylation of aspartate and asparagine is (R) stereospecific within EGF domains.

The protein resides in the secreted. Its subcellular location is the cell surface. The enzyme catalyses Cleavage of Arg-|-Ala bond in complement component C4 to form C4a and C4b, and Lys(or Arg)-|-Lys bond in complement component C2 to form C2a and C2b: the 'classical' pathway C3 convertase.. Cleaved and activated by C1R. Immunoglobulin-binding promotes autoactivation of C1R, which results in the cleavage of the Arg-Ile bond in the catalytic domain. Inhibited by C1 inhibitor (SERPING1). Component of the complement C1 complex, a multiprotein complex that initiates the classical pathway of the complement system, a cascade of proteins that leads to phagocytosis and breakdown of pathogens and signaling that strengthens the adaptive immune system. C1S is activated following association of the C1 complex with immunoglobulins (IgG or IgM) complexed with antigens to form antigen-antibody complexes on the surface of pathogens. C1S is cleaved and activated by C1R to generate C1s subcomponent heavy and light chains. C1s subcomponent light chain then cleaves and activates C2 and C4, the next components of the classical complement pathway. Functionally, serine protease component of the complement C1 complex, which catalyzes cleavage and activation of C2 and C4, the next components of the classical complement pathway. Also able to cleave C1 inhibitor (SERPING1) in vitro; additional evidence is however required to confirm this result in vivo. Also cleaves IGFBP5 and thereby inhibits the trophic effects of IGF1. This chain is Complement C1s subcomponent, found in Homo sapiens (Human).